The sequence spans 195 residues: Probable DNA-directed RNA polymerase subunit delta (195 aa).

The HTH HARE-type domain occupies Leu-14 to Trp-81. Residues Thr-91–Glu-195 are disordered. 2 stretches are compositionally biased toward acidic residues: residues Thr-116–Leu-171 and Phe-179–Glu-195.

It belongs to the RpoE family. In terms of assembly, RNAP is composed of a core of 2 alpha, a beta and a beta' subunits. The core is associated with a delta subunit and one of several sigma factors.

Its function is as follows. Participates in both the initiation and recycling phases of transcription. In the presence of the delta subunit, RNAP displays an increased specificity of transcription, a decreased affinity for nucleic acids, and an increased efficiency of RNA synthesis because of enhanced recycling. The protein is Probable DNA-directed RNA polymerase subunit delta of Limosilactobacillus fermentum (strain NBRC 3956 / LMG 18251) (Lactobacillus fermentum).